The following is a 422-amino-acid chain: Keratin, type II cytoskeletal 80 (422 aa).

A head region spans residues 1-82 (MACRSCVVGF…DPAIQQQKNN (82 aa)). Ser45 carries the phosphoserine modification. The coil 1A stretch occupies residues 83–118 (EKEEMKVLNDKFASLIGKVQALEQRNQLLETRWHFL). The region spanning 83–394 (EKEEMKVLND…KLMEGEESRM (312 aa)) is the IF rod domain. The linker 1 stretch occupies residues 119–135 (QSQDSATFDLGHLYEEY). Residues 136–227 (QGRLQEELRK…SIYEQELKDL (92 aa)) are coil 1B. A linker 12 region spans residues 228–251 (AAQLKDVSVTVGMDSRCHIDLSGI). The coil 2 stretch occupies residues 252-390 (VEEVKAQYDA…ATYRKLMEGE (139 aa)). Residues 391 to 422 (ESRMDMPSATVVSAVQARCRTAPTLPHPLCSL) form a tail region.

This sequence belongs to the intermediate filament family. As to quaternary structure, heterotetramer of two type I and two type II keratins.

The chain is Keratin, type II cytoskeletal 80 (KRT80) from Bos taurus (Bovine).